The chain runs to 273 residues: Ribosomal RNA small subunit methyltransferase A (273 aa).

S-adenosyl-L-methionine contacts are provided by N18, L20, G45, E66, D91, and N113.

Belongs to the class I-like SAM-binding methyltransferase superfamily. rRNA adenine N(6)-methyltransferase family. RsmA subfamily.

It localises to the cytoplasm. The catalysed reaction is adenosine(1518)/adenosine(1519) in 16S rRNA + 4 S-adenosyl-L-methionine = N(6)-dimethyladenosine(1518)/N(6)-dimethyladenosine(1519) in 16S rRNA + 4 S-adenosyl-L-homocysteine + 4 H(+). Its function is as follows. Specifically dimethylates two adjacent adenosines (A1518 and A1519) in the loop of a conserved hairpin near the 3'-end of 16S rRNA in the 30S particle. May play a critical role in biogenesis of 30S subunits. This is Ribosomal RNA small subunit methyltransferase A from Salmonella newport (strain SL254).